The primary structure comprises 217 residues: Probable transaldolase (217 aa).

The Schiff-base intermediate with substrate role is filled by Lys-83.

This sequence belongs to the transaldolase family. Type 3B subfamily.

The protein localises to the cytoplasm. It catalyses the reaction D-sedoheptulose 7-phosphate + D-glyceraldehyde 3-phosphate = D-erythrose 4-phosphate + beta-D-fructose 6-phosphate. It functions in the pathway carbohydrate degradation; pentose phosphate pathway; D-glyceraldehyde 3-phosphate and beta-D-fructose 6-phosphate from D-ribose 5-phosphate and D-xylulose 5-phosphate (non-oxidative stage): step 2/3. Its function is as follows. Transaldolase is important for the balance of metabolites in the pentose-phosphate pathway. The sequence is that of Probable transaldolase from Caldicellulosiruptor saccharolyticus (strain ATCC 43494 / DSM 8903 / Tp8T 6331).